The chain runs to 283 residues: Release factor glutamine methyltransferase (283 aa).

S-adenosyl-L-methionine is bound by residues 121 to 125 (GTGSG), aspartate 144, and asparagine 188. Position 188 to 191 (188 to 191 (NPPY)) interacts with substrate.

The protein belongs to the protein N5-glutamine methyltransferase family. PrmC subfamily.

The enzyme catalyses L-glutaminyl-[peptide chain release factor] + S-adenosyl-L-methionine = N(5)-methyl-L-glutaminyl-[peptide chain release factor] + S-adenosyl-L-homocysteine + H(+). Its function is as follows. Methylates the class 1 translation termination release factors RF1/PrfA and RF2/PrfB on the glutamine residue of the universally conserved GGQ motif. The chain is Release factor glutamine methyltransferase from Bacillus cereus (strain ATCC 14579 / DSM 31 / CCUG 7414 / JCM 2152 / NBRC 15305 / NCIMB 9373 / NCTC 2599 / NRRL B-3711).